We begin with the raw amino-acid sequence, 229 residues long: MIPLQKDNQEEGVCPICQESLKEAVSTNCGHLFCRVCLTQHVEKASASGVFCCPLCRKPCSEEVLGTGYICPNHQKRVCRFCEESRLLLCVECLVSPEHMSHHELTIENALSHYKERLNRRSRKLRKDIAELQRLKAQQEKKLQALQQWLGQLEHMPAEAARILDISRAVTQLSSLVIDLERTAKELDTNTLKNAGDLLNRSAPQKLEVIYPQLEKGVSELLLQPPQKL.

The segment at 14 to 57 (CPICQESLKEAVSTNCGHLFCRVCLTQHVEKASASGVFCCPLCR) adopts an RING-type zinc-finger fold. Residues 66–107 (GTGYICPNHQKRVCRFCEESRLLLCVECLVSPEHMSHHELTI) form a B box-type zinc finger. Residues C71, H74, C93, and H99 each contribute to the Zn(2+) site. Positions 107 to 154 (IENALSHYKERLNRRSRKLRKDIAELQRLKAQQEKKLQALQQWLGQLE) form a coiled coil.

Belongs to the TRIM/RBCC family. Interacts with NEDD8.

The enzyme catalyses S-ubiquitinyl-[E2 ubiquitin-conjugating enzyme]-L-cysteine + [acceptor protein]-L-lysine = [E2 ubiquitin-conjugating enzyme]-L-cysteine + N(6)-ubiquitinyl-[acceptor protein]-L-lysine.. E3 ubiquitin-protein ligase that plays a role in the limitation of the innate immune response. Mediates inhibition of the RLR signaling pathway by ubiquitinating RIGI and IFIH1 receptors, leading to their proteasomal degradation. Also promotes the neddylation of IKBKG/NEMO, stabilizing NFKBIA, and thereby inhibiting of NF-kappa-B nuclear translocation and activation. The chain is E3 ubiquitin ligase TRIM40 (TRIM40) from Pan troglodytes (Chimpanzee).